We begin with the raw amino-acid sequence, 130 residues long: Phosphomevalonate dehydratase small subunit (130 aa).

The Proton acceptor role is filled by S62.

This sequence belongs to the AcnX type II small subunit family. In terms of assembly, heterodimer composed of a large subunit (PMDh-L) and a small subunit (PMDh-S).

The enzyme catalyses (R)-5-phosphomevalonate = (2E)-3-methyl-5-phosphooxypent-2-enoate + H2O. The protein operates within isoprenoid biosynthesis; isopentenyl diphosphate biosynthesis via mevalonate pathway. In terms of biological role, component of a hydro-lyase that catalyzes the dehydration of mevalonate 5-phosphate (MVA5P) to form trans-anhydromevalonate 5-phosphate (tAHMP). Involved in the archaeal mevalonate (MVA) pathway, which provides fundamental precursors for isoprenoid biosynthesis, such as isopentenyl diphosphate (IPP) and dimethylallyl diphosphate (DMAPP). This is Phosphomevalonate dehydratase small subunit from Thermococcus onnurineus (strain NA1).